The chain runs to 293 residues: Ribosomal protein L11 methyltransferase (293 aa).

Residues Thr-145, Gly-166, Asp-188, and Asn-230 each coordinate S-adenosyl-L-methionine.

Belongs to the methyltransferase superfamily. PrmA family.

Its subcellular location is the cytoplasm. It carries out the reaction L-lysyl-[protein] + 3 S-adenosyl-L-methionine = N(6),N(6),N(6)-trimethyl-L-lysyl-[protein] + 3 S-adenosyl-L-homocysteine + 3 H(+). Its function is as follows. Methylates ribosomal protein L11. The polypeptide is Ribosomal protein L11 methyltransferase (Actinobacillus pleuropneumoniae serotype 3 (strain JL03)).